The following is a 279-amino-acid chain: MDDDGFRNWGYYEPAAATFKGNLGLQLMSTIDRNTKPFLPGRDPNLMMGPNGSYHHQEPPIHMSYNWINQQKDKFFNMLPVTTATPNYGNVLPETSSAPSMQMNLHHHLQTEENPVKLEEEIVVQTKKRKTNAKAGSTPKAKKPRKPKDENSNNNNNNNTNVTRVKPAKKSVDLVINGVSMDISGLPVPICTCTGAPQQCYRWGCGGWQSACCTTNISMHPLPMSTKRRGARISGRKMSQGAFKKVLEKLASDGFNFGNPIDLKSHWARHGTNKFVTIR.

Positions 126 to 167 (TKKRKTNAKAGSTPKAKKPRKPKDENSNNNNNNNTNVTRVKP) are disordered. The span at 152–161 (SNNNNNNNTN) shows a compositional bias: low complexity.

This sequence belongs to the BBR/BPC family. In terms of tissue distribution, expressed in seedlings, leaves and pistils. Detected in the base of flowers and tips of carpels, in sepal and petal vasculature, in pollen grains, in young rosette, in the lateral and tip of primary roots, and in ovule at the exception of the outer integument.

The protein resides in the nucleus. Transcriptional regulator that specifically binds to GA-rich elements (GAGA-repeats) present in regulatory sequences of genes involved in developmental processes. This Arabidopsis thaliana (Mouse-ear cress) protein is Protein BASIC PENTACYSTEINE2.